The primary structure comprises 337 residues: Pentalenene synthase (337 aa).

Positions 80, 84, 219, 223, and 227 each coordinate Mg(2+). A DDXXD motif motif is present at residues 80 to 84 (DDLFD).

It belongs to the terpene synthase family. Monomer. Mg(2+) is required as a cofactor.

It catalyses the reaction (2E,6E)-farnesyl diphosphate = pentalenene + diphosphate. It participates in sesquiterpene biosynthesis; pentalenene biosynthesis; pentalenene from farnesyl diphosphate: step 1/1. Its pathway is antibiotic biosynthesis; pentalenolactone biosynthesis. Catalyzes the cyclization of farnesyl diphosphate (FPP) to the tricyclic sesquiterpene pentalenene, which is the hydrocarbon precursor of the pentalenolactone family of antibiotics produced by a variety of Streptomyces species. This Streptomyces arenae protein is Pentalenene synthase (pntA).